Here is a 233-residue protein sequence, read N- to C-terminus: 3-dehydroquinate dehydratase (233 aa).

3-dehydroquinate is bound by residues 34–36 (ELR) and Arg-64. His-118 functions as the Proton donor/acceptor in the catalytic mechanism. Lys-145 serves as the catalytic Schiff-base intermediate with substrate. The 3-dehydroquinate site is built by Arg-185, Ser-205, and Gln-209.

Belongs to the type-I 3-dehydroquinase family. In terms of assembly, homodimer.

It carries out the reaction 3-dehydroquinate = 3-dehydroshikimate + H2O. It functions in the pathway metabolic intermediate biosynthesis; chorismate biosynthesis; chorismate from D-erythrose 4-phosphate and phosphoenolpyruvate: step 3/7. Involved in the third step of the chorismate pathway, which leads to the biosynthesis of aromatic amino acids. Catalyzes the cis-dehydration of 3-dehydroquinate (DHQ) and introduces the first double bond of the aromatic ring to yield 3-dehydroshikimate. The sequence is that of 3-dehydroquinate dehydratase from Coxiella burnetii (strain CbuK_Q154) (Coxiella burnetii (strain Q154)).